The primary structure comprises 358 residues: Alanine racemase (358 aa).

Catalysis depends on Lys-35, which acts as the Proton acceptor; specific for D-alanine. Position 35 is an N6-(pyridoxal phosphate)lysine (Lys-35). Arg-130 is a binding site for substrate. Tyr-255 serves as the catalytic Proton acceptor; specific for L-alanine. Met-303 serves as a coordination point for substrate.

Belongs to the alanine racemase family. Requires pyridoxal 5'-phosphate as cofactor.

It carries out the reaction L-alanine = D-alanine. Its pathway is amino-acid biosynthesis; D-alanine biosynthesis; D-alanine from L-alanine: step 1/1. In terms of biological role, catalyzes the interconversion of L-alanine and D-alanine. May also act on other amino acids. The sequence is that of Alanine racemase (alr) from Shewanella sp. (strain MR-4).